Here is a 399-residue protein sequence, read N- to C-terminus: Probable peptidoglycan glycosyltransferase FtsW (399 aa).

The Cytoplasmic portion of the chain corresponds to 1 to 32; that stretch reads MMAGFAQTTITKINQFYERWMPRLPAEMTARN. The chain crosses the membrane as a helical span at residues 33–53; the sequence is VLVFCVVCLLCIGSVMVASAS. At 54–72 the chain is on the periplasmic side; that stretch reads MPYAEYMHENPFHYVVRHA. A helical membrane pass occupies residues 73–93; it reads ISIATAAIVAYLVYKVPLNVW. Residues 94–97 are Cytoplasmic-facing; that stretch reads FKNT. Residues 98-118 form a helical membrane-spanning segment; sequence FSFWLITILLLLAVLVIGTEV. At 119–126 the chain is on the periplasmic side; sequence NGSRRWIR. Residues 127–147 traverse the membrane as a helical segment; sequence LAGFTLQPTEVAKVMMAIFTA. Residues 148–159 are Cytoplasmic-facing; it reads DYVVRRAKEVRT. The chain crosses the membrane as a helical span at residues 160-180; sequence HWKGLVRLSGVMAITVGLIIA. Residues 181 to 183 lie on the Periplasmic side of the membrane; it reads EPD. The helical transmembrane segment at 184 to 204 threads the bilayer; sequence LGATVVIVLMMVGIFFLAGAP. Residues 205-207 lie on the Cytoplasmic side of the membrane; it reads PTQ. Residues 208 to 228 form a helical membrane-spanning segment; that stretch reads FAIMLGAVVMGIGFLILFEPY. The Periplasmic portion of the chain corresponds to 229-292; sequence RLARAMSFTN…DFMLAVLGEE (64 aa). Residues 293–313 traverse the membrane as a helical segment; the sequence is FGFVGISIVIGLSFIMLACCI. Over 314–327 the chain is Cytoplasmic; sequence KIGHRALKHNFLRA. Residues 328–348 traverse the membrane as a helical segment; that stretch reads GYLAYGISIIFLLQIIVNAGM. Over 349–359 the chain is Periplasmic; it reads NMGLMPTKGLT. A helical transmembrane segment spans residues 360–380; it reads LPFISYGGTSLMMCAAMISLI. Over 381-399 the chain is Cytoplasmic; it reads LRIDASTQEINPDREESNF.

Belongs to the SEDS family. FtsW subfamily.

The protein localises to the cell inner membrane. It catalyses the reaction [GlcNAc-(1-&gt;4)-Mur2Ac(oyl-L-Ala-gamma-D-Glu-L-Lys-D-Ala-D-Ala)](n)-di-trans,octa-cis-undecaprenyl diphosphate + beta-D-GlcNAc-(1-&gt;4)-Mur2Ac(oyl-L-Ala-gamma-D-Glu-L-Lys-D-Ala-D-Ala)-di-trans,octa-cis-undecaprenyl diphosphate = [GlcNAc-(1-&gt;4)-Mur2Ac(oyl-L-Ala-gamma-D-Glu-L-Lys-D-Ala-D-Ala)](n+1)-di-trans,octa-cis-undecaprenyl diphosphate + di-trans,octa-cis-undecaprenyl diphosphate + H(+). The protein operates within cell wall biogenesis; peptidoglycan biosynthesis. Its function is as follows. Peptidoglycan polymerase that is essential for cell division. In Acinetobacter baylyi (strain ATCC 33305 / BD413 / ADP1), this protein is Probable peptidoglycan glycosyltransferase FtsW.